The chain runs to 205 residues: Probable thymidylate kinase (205 aa).

10–17 (GIDGSGKS) serves as a coordination point for ATP.

Belongs to the thymidylate kinase family.

The catalysed reaction is dTMP + ATP = dTDP + ADP. The sequence is that of Probable thymidylate kinase from Methanosarcina barkeri (strain Fusaro / DSM 804).